The sequence spans 89 residues: Small ribosomal subunit protein uS15 (89 aa).

Belongs to the universal ribosomal protein uS15 family. As to quaternary structure, part of the 30S ribosomal subunit. Forms a bridge to the 50S subunit in the 70S ribosome, contacting the 23S rRNA.

In terms of biological role, one of the primary rRNA binding proteins, it binds directly to 16S rRNA where it helps nucleate assembly of the platform of the 30S subunit by binding and bridging several RNA helices of the 16S rRNA. Its function is as follows. Forms an intersubunit bridge (bridge B4) with the 23S rRNA of the 50S subunit in the ribosome. The protein is Small ribosomal subunit protein uS15 of Anaeromyxobacter sp. (strain Fw109-5).